Consider the following 198-residue polypeptide: MICOS complex subunit Mic26 (198 aa).

Residues M1 to A23 form the signal peptide. The N-linked (GlcNAc...) asparagine glycan is linked to N63. Residues P108–A128 traverse the membrane as a helical segment.

It belongs to the apolipoprotein O/MICOS complex subunit Mic27 family. As to quaternary structure, component of the mitochondrial contact site and cristae organizing system (MICOS) complex, composed of at least MICOS10/MIC10, CHCHD3/MIC19, CHCHD6/MIC25, APOOL/MIC27, IMMT/MIC60, APOO/MIC23/MIC26 and MICOS13/MIC13. This complex was also known under the names MINOS or MitOS complex. The MICOS complex associates with mitochondrial outer membrane proteins SAMM50, MTX1 and MTX2 (together described as components of the mitochondrial outer membrane sorting assembly machinery (SAM) complex) and DNAJC11, mitochondrial inner membrane protein TMEM11 and with HSPA9. The MICOS and SAM complexes together with DNAJC11 are part of a large protein complex spanning both membranes termed the mitochondrial intermembrane space bridging (MIB) complex. Interacts with IMMT/MIC60. Interacts with MICOS10/MIC10 and APOOL/MIC27.

It localises to the mitochondrion inner membrane. The protein resides in the mitochondrion. Its subcellular location is the endoplasmic reticulum membrane. It is found in the golgi apparatus membrane. Its function is as follows. Component of the MICOS complex, a large protein complex of the mitochondrial inner membrane that plays crucial roles in the maintenance of crista junctions, inner membrane architecture, and formation of contact sites to the outer membrane. Plays a crucial role in crista junction formation and mitochondrial function. Can induce cardiac lipotoxicity by enhancing mitochondrial respiration and fatty acid metabolism in cardiac myoblasts. Promotes cholesterol efflux from macrophage cells. Detected in HDL, LDL and VLDL. Secreted by a microsomal triglyceride transfer protein (MTTP)-dependent mechanism, probably as a VLDL-associated protein that is subsequently transferred to HDL. The chain is MICOS complex subunit Mic26 (Apoo) from Mus musculus (Mouse).